A 148-amino-acid polypeptide reads, in one-letter code: Arginine repressor (148 aa).

It belongs to the ArgR family.

The protein localises to the cytoplasm. It participates in amino-acid biosynthesis; L-arginine biosynthesis [regulation]. In terms of biological role, regulates arginine biosynthesis genes. In Chlorobium luteolum (strain DSM 273 / BCRC 81028 / 2530) (Pelodictyon luteolum), this protein is Arginine repressor.